The following is a 380-amino-acid chain: Cytochrome b (380 aa).

Helical transmembrane passes span 34–54 (FGSL…LLAA), 78–99 (WLIR…YLHI), 114–134 (WNTG…GYVL), and 179–199 (FFAL…IHLA). 2 residues coordinate heme b: His-84 and His-98. The heme b site is built by His-183 and His-197. His-202 is a binding site for a ubiquinone. Helical transmembrane passes span 227–247 (LKDI…ALFS), 289–309 (LGGV…PLLH), 321–341 (LSQL…WIGS), and 348–368 (FIII…ILFP).

The protein belongs to the cytochrome b family. As to quaternary structure, the cytochrome bc1 complex contains 11 subunits: 3 respiratory subunits (MT-CYB, CYC1 and UQCRFS1), 2 core proteins (UQCRC1 and UQCRC2) and 6 low-molecular weight proteins (UQCRH/QCR6, UQCRB/QCR7, UQCRQ/QCR8, UQCR10/QCR9, UQCR11/QCR10 and a cleavage product of UQCRFS1). This cytochrome bc1 complex then forms a dimer. Requires heme b as cofactor.

Its subcellular location is the mitochondrion inner membrane. Functionally, component of the ubiquinol-cytochrome c reductase complex (complex III or cytochrome b-c1 complex) that is part of the mitochondrial respiratory chain. The b-c1 complex mediates electron transfer from ubiquinol to cytochrome c. Contributes to the generation of a proton gradient across the mitochondrial membrane that is then used for ATP synthesis. This chain is Cytochrome b (MT-CYB), found in Cyrtonyx montezumae (Montezuma quail).